The chain runs to 21 residues: Conchiolin protein p20 (21 aa).

The span at tyrosine 1 to proline 14 shows a compositional bias: low complexity. The segment at tyrosine 1 to tyrosine 21 is disordered.

This sequence belongs to the N16 matrix protein family. Homooligomer; disulfide-linked. May also be disulfide-linked to insoluble organic matrix. In terms of processing, according to PubMed:11250534, amino acids 4 and 11 may be sulfated or phosphorylated. By similarity with the N14 matrix protein, amino-acid 4 may be a cysteine involved in a disulfide bond. Component of conchiolin, the organic matrix of nacre. Is dispersed in calcium carbonate and also linked by disulfide bonds to the organic core of nacre.

Its subcellular location is the secreted. It localises to the extracellular space. The protein localises to the extracellular matrix. Its function is as follows. May be specifically involved in the formation of the nacreous layer. This is Conchiolin protein p20 from Pinctada maxima (Silver-lipped pearl oyster).